The primary structure comprises 260 residues: Methylphosphonate hydroxylase (260 aa).

Lysine 107 contacts 2-oxoglutarate. Residues histidine 117, aspartate 119, and histidine 195 each coordinate Fe cation.

It belongs to the PhyH family. Fe(2+) is required as a cofactor.

The enzyme catalyses methylphosphonate + 2-oxoglutarate + O2 = hydroxymethylphosphonate + succinate + CO2. Its function is as follows. Part of an oxidative pathway for utilization of methylphosphonic acid as a phosphate source. Catalyzes the conversion of methylphosphonic acid to hydroxymethylphosphonic acid. Is specific for the hydroxylation of methylphosphonate. This is Methylphosphonate hydroxylase from Gimesia maris (strain ATCC 29201 / DSM 8797 / 534-30) (Planctomyces maris).